The sequence spans 315 residues: MRLLFAGTPDVAVPTLTALVADPRHEVAAVLTRPDAAVGRHRTPRPCPVAKAAEELGIPAIKATSVKSGEGHDAITSLDADVAVVVAYGGLIPADLLAVPRHGWINLHFSLLPRWRGAAPIQRAIMAGDEETGACVFQLVESLDAGPVYRTMTVPIGPMTTAGELLDELAHTATPLVIEALEDIEAGVEPTPQSVEGVTIAPQIHPDDVRVTVTAAAQEIDNLVRGVSPTPGAWAELDGKRFKILRTRCLEAGDGVPSTVATAQPGQLVATRKQLFLGTGSQPLELLQVQAFGKRAMSGADWARGADIDAGTRLR.

(6S)-5,6,7,8-tetrahydrofolate is bound at residue 110 to 113 (SLLP).

It belongs to the Fmt family.

It carries out the reaction L-methionyl-tRNA(fMet) + (6R)-10-formyltetrahydrofolate = N-formyl-L-methionyl-tRNA(fMet) + (6S)-5,6,7,8-tetrahydrofolate + H(+). Attaches a formyl group to the free amino group of methionyl-tRNA(fMet). The formyl group appears to play a dual role in the initiator identity of N-formylmethionyl-tRNA by promoting its recognition by IF2 and preventing the misappropriation of this tRNA by the elongation apparatus. The sequence is that of Methionyl-tRNA formyltransferase from Cutibacterium acnes (strain DSM 16379 / KPA171202) (Propionibacterium acnes).